Consider the following 199-residue polypeptide: Transgelin-3 (199 aa).

A Calponin-homology (CH) domain is found at 24–136 (ADLENKLVDW…RTLMALGSVA (113 aa)). Ser-163 is modified (phosphoserine). A Calponin-like repeat occupies 174–199 (IGLQMGSNKGASQAGMTGYGMPRQIM). Positions 176–188 (LQMGSNKGASQAG) are enriched in polar residues. Positions 176 to 199 (LQMGSNKGASQAGMTGYGMPRQIM) are disordered.

It belongs to the calponin family.

In Pongo abelii (Sumatran orangutan), this protein is Transgelin-3 (TAGLN3).